The primary structure comprises 476 residues: ATP synthase subunit beta (476 aa).

152 to 159 (GGAGVGKT) provides a ligand contact to ATP.

Belongs to the ATPase alpha/beta chains family. In terms of assembly, F-type ATPases have 2 components, CF(1) - the catalytic core - and CF(0) - the membrane proton channel. CF(1) has five subunits: alpha(3), beta(3), gamma(1), delta(1), epsilon(1). CF(0) has three main subunits: a(1), b(2) and c(9-12). The alpha and beta chains form an alternating ring which encloses part of the gamma chain. CF(1) is attached to CF(0) by a central stalk formed by the gamma and epsilon chains, while a peripheral stalk is formed by the delta and b chains.

The protein localises to the cell inner membrane. It catalyses the reaction ATP + H2O + 4 H(+)(in) = ADP + phosphate + 5 H(+)(out). Its function is as follows. Produces ATP from ADP in the presence of a proton gradient across the membrane. The catalytic sites are hosted primarily by the beta subunits. The polypeptide is ATP synthase subunit beta (Acidiphilium cryptum (strain JF-5)).